Consider the following 758-residue polypeptide: 5-methyltetrahydropteroyltriglutamate--homocysteine methyltransferase (758 aa).

Residues 17–20 and Lys117 contribute to the 5-methyltetrahydropteroyltri-L-glutamate site; that span reads RELK. Residues 434 to 436 and Glu487 each bind L-homocysteine; that span reads IGS. Residues 434 to 436 and Glu487 each bind L-methionine; that span reads IGS. 5-methyltetrahydropteroyltri-L-glutamate contacts are provided by residues 518 to 519 and Trp564; that span reads RC. Asp602 serves as a coordination point for L-homocysteine. An L-methionine-binding site is contributed by Asp602. Residue Glu608 participates in 5-methyltetrahydropteroyltri-L-glutamate binding. The Zn(2+) site is built by His644, Cys646, and Glu668. The active-site Proton donor is the His697. Residue Cys729 participates in Zn(2+) binding.

This sequence belongs to the vitamin-B12 independent methionine synthase family. Zn(2+) serves as cofactor.

The enzyme catalyses 5-methyltetrahydropteroyltri-L-glutamate + L-homocysteine = tetrahydropteroyltri-L-glutamate + L-methionine. It functions in the pathway amino-acid biosynthesis; L-methionine biosynthesis via de novo pathway; L-methionine from L-homocysteine (MetE route): step 1/1. Functionally, catalyzes the transfer of a methyl group from 5-methyltetrahydrofolate to homocysteine resulting in methionine formation. This is 5-methyltetrahydropteroyltriglutamate--homocysteine methyltransferase from Yersinia pestis (strain Pestoides F).